An 83-amino-acid chain; its full sequence is Small ribosomal subunit protein uS17 (83 aa).

The protein belongs to the universal ribosomal protein uS17 family. As to quaternary structure, part of the 30S ribosomal subunit.

One of the primary rRNA binding proteins, it binds specifically to the 5'-end of 16S ribosomal RNA. This chain is Small ribosomal subunit protein uS17, found in Synechococcus sp. (strain RCC307).